The sequence spans 121 residues: Small ribosomal subunit protein uS13 (121 aa).

Residues 94–121 are disordered; sequence GLPVRGQKTRNNAHTVKGKPKAIAGKKK. A compositionally biased stretch (basic residues) spans 109–121; the sequence is VKGKPKAIAGKKK.

Belongs to the universal ribosomal protein uS13 family. As to quaternary structure, part of the 30S ribosomal subunit. Forms a loose heterodimer with protein S19. Forms two bridges to the 50S subunit in the 70S ribosome.

In terms of biological role, located at the top of the head of the 30S subunit, it contacts several helices of the 16S rRNA. In the 70S ribosome it contacts the 23S rRNA (bridge B1a) and protein L5 of the 50S subunit (bridge B1b), connecting the 2 subunits; these bridges are implicated in subunit movement. Contacts the tRNAs in the A and P-sites. The chain is Small ribosomal subunit protein uS13 from Onion yellows phytoplasma (strain OY-M).